The primary structure comprises 152 residues: Xanthine-guanine phosphoribosyltransferase (152 aa).

5-phospho-alpha-D-ribose 1-diphosphate is bound by residues 37–38 (RG) and 88–96 (DDLVDTGNT). Asp-89 provides a ligand contact to Mg(2+). 2 residues coordinate guanine: Asp-92 and Ile-135. Xanthine is bound by residues Asp-92 and Ile-135. GMP-binding positions include 92–96 (DTGNT) and 134–135 (WI).

The protein belongs to the purine/pyrimidine phosphoribosyltransferase family. XGPT subfamily. In terms of assembly, homotetramer. It depends on Mg(2+) as a cofactor.

It is found in the cell inner membrane. The catalysed reaction is GMP + diphosphate = guanine + 5-phospho-alpha-D-ribose 1-diphosphate. It catalyses the reaction XMP + diphosphate = xanthine + 5-phospho-alpha-D-ribose 1-diphosphate. The enzyme catalyses IMP + diphosphate = hypoxanthine + 5-phospho-alpha-D-ribose 1-diphosphate. It participates in purine metabolism; GMP biosynthesis via salvage pathway; GMP from guanine: step 1/1. The protein operates within purine metabolism; XMP biosynthesis via salvage pathway; XMP from xanthine: step 1/1. Its function is as follows. Purine salvage pathway enzyme that catalyzes the transfer of the ribosyl-5-phosphate group from 5-phospho-alpha-D-ribose 1-diphosphate (PRPP) to the N9 position of the 6-oxopurines guanine and xanthine to form the corresponding ribonucleotides GMP (guanosine 5'-monophosphate) and XMP (xanthosine 5'-monophosphate), with the release of PPi. To a lesser extent, also acts on hypoxanthine. This chain is Xanthine-guanine phosphoribosyltransferase, found in Mannheimia succiniciproducens (strain KCTC 0769BP / MBEL55E).